We begin with the raw amino-acid sequence, 476 residues long: Zinc transporter SLC39A7 (476 aa).

A helical membrane pass occupies residues 7–27 (APHWVAVGLLTWAALGLLVAG). A compositionally biased stretch (basic and acidic residues) spans 35 to 109 (HKDVEEDFHG…SHGHSHDSLH (75 aa)). Residues 35–131 (HKDVEEDFHG…HGTSREAGAP (97 aa)) form a disordered region. H73 carries the pros-methylhistidine modification. Positions 110–120 (HGGHGHAHREH) are enriched in basic residues. 3 helical membrane-spanning segments follow: residues 146–166 (ALGA…LIPV), 177–197 (LQIL…LHLI), and 222–242 (GPIL…LVVE). Residues 249 to 320 (KGGHGHSHGH…QSPEEEKAGS (72 aa)) form a disordered region. The span at 257 to 292 (GHGDRHAHGDSHTHGDRHECSSKEKPSTEEEKEVGG) shows a compositional bias: basic and acidic residues. S283 is subject to Phosphoserine. Transmembrane regions (helical) follow at residues 393–413 (VTAI…GGAV) and 417–437 (VAGG…FIYV).

The protein belongs to the ZIP transporter (TC 2.A.5) family. KE4/Catsup subfamily. As to quaternary structure, homodimer. In terms of processing, methylation at some His residue by METTL9 leads to reduced zinc-binding. Post-translationally, rapidly phosphorylated by CK2 following Zn(2+) treatment. This phosphorylation is required for efficient cytosolic Zn(2+) release. In terms of tissue distribution, widely expressed. Highly expressed in the intestinal crypts.

Its subcellular location is the endoplasmic reticulum membrane. It localises to the golgi apparatus. It is found in the cis-Golgi network membrane. It catalyses the reaction Zn(2+)(in) = Zn(2+)(out). Its function is as follows. Transports Zn(2+) from the endoplasmic reticulum (ER)/Golgi apparatus to the cytosol, playing an essential role in the regulation of cytosolic zinc levels. Acts as a gatekeeper of zinc release from intracellular stores, requiring post-translational activation by phosphorylation, resulting in activation of multiple downstream pathways leading to cell growth and proliferation. Has an essential role in B cell development and is required for proper B cell receptor signaling. Plays an important role in maintaining intestinal epithelial homeostasis and skin dermis development by regulating ER function. Controls cell signaling pathways involved in glucose metabolism in skeletal muscle. Has a protective role against ER stress in different biological contexts. Mediates Zn(2+)-induced ferroptosis. In Mus musculus (Mouse), this protein is Zinc transporter SLC39A7 (Slc39a7).